The chain runs to 46 residues: Esculentin-1 (46 aa).

Cys-40 and Cys-46 are oxidised to a cystine.

Expressed by the skin glands.

It localises to the secreted. Its function is as follows. Antimicrobial peptide. Stimulates insulin release by BRIN-BD11 cells in vitro. The protein is Esculentin-1 of Pelophylax saharicus (Sahara frog).